Reading from the N-terminus, the 87-residue chain is Large ribosomal subunit protein bL31B (87 aa).

The protein belongs to the bacterial ribosomal protein bL31 family. Type B subfamily. In terms of assembly, part of the 50S ribosomal subunit.

This is Large ribosomal subunit protein bL31B from Burkholderia thailandensis (strain ATCC 700388 / DSM 13276 / CCUG 48851 / CIP 106301 / E264).